Here is a 366-residue protein sequence, read N- to C-terminus: Holliday junction branch migration complex subunit RuvB (366 aa).

Residues 1 to 49 (MAIISSKKQPPEPNGQPNKRPESAPSVPKEKVLQPEAAIDEQGKQEESI) form a disordered region. Residues 13–210 (PNGQPNKRPE…FGLIQKLRFY (198 aa)) are large ATPase domain (RuvB-L). Residues Ile-49, Arg-50, Gly-91, Lys-94, Thr-95, Thr-96, 157–159 (EDY), Arg-200, Tyr-210, and Arg-247 contribute to the ATP site. Thr-95 contributes to the Mg(2+) binding site. The interval 211 to 281 (EVDELSQIVL…IAAEALQLFQ (71 aa)) is small ATPAse domain (RuvB-S). Residues 284 to 366 (PCGLDWTDRR…TPPNEQLSLL (83 aa)) form a head domain (RuvB-H) region. Residues Arg-339 and Arg-344 each contribute to the DNA site.

It belongs to the RuvB family. Homohexamer. Forms an RuvA(8)-RuvB(12)-Holliday junction (HJ) complex. HJ DNA is sandwiched between 2 RuvA tetramers; dsDNA enters through RuvA and exits via RuvB. An RuvB hexamer assembles on each DNA strand where it exits the tetramer. Each RuvB hexamer is contacted by two RuvA subunits (via domain III) on 2 adjacent RuvB subunits; this complex drives branch migration. In the full resolvosome a probable DNA-RuvA(4)-RuvB(12)-RuvC(2) complex forms which resolves the HJ.

It localises to the cytoplasm. It catalyses the reaction ATP + H2O = ADP + phosphate + H(+). The RuvA-RuvB-RuvC complex processes Holliday junction (HJ) DNA during genetic recombination and DNA repair, while the RuvA-RuvB complex plays an important role in the rescue of blocked DNA replication forks via replication fork reversal (RFR). RuvA specifically binds to HJ cruciform DNA, conferring on it an open structure. The RuvB hexamer acts as an ATP-dependent pump, pulling dsDNA into and through the RuvAB complex. RuvB forms 2 homohexamers on either side of HJ DNA bound by 1 or 2 RuvA tetramers; 4 subunits per hexamer contact DNA at a time. Coordinated motions by a converter formed by DNA-disengaged RuvB subunits stimulates ATP hydrolysis and nucleotide exchange. Immobilization of the converter enables RuvB to convert the ATP-contained energy into a lever motion, pulling 2 nucleotides of DNA out of the RuvA tetramer per ATP hydrolyzed, thus driving DNA branch migration. The RuvB motors rotate together with the DNA substrate, which together with the progressing nucleotide cycle form the mechanistic basis for DNA recombination by continuous HJ branch migration. Branch migration allows RuvC to scan DNA until it finds its consensus sequence, where it cleaves and resolves cruciform DNA. The protein is Holliday junction branch migration complex subunit RuvB of Nostoc sp. (strain PCC 7120 / SAG 25.82 / UTEX 2576).